Consider the following 480-residue polypeptide: UDP-N-acetylmuramate--L-alanine ligase (480 aa).

ATP is bound at residue 129–135 (GTHGKTT).

It belongs to the MurCDEF family.

The protein localises to the cytoplasm. It catalyses the reaction UDP-N-acetyl-alpha-D-muramate + L-alanine + ATP = UDP-N-acetyl-alpha-D-muramoyl-L-alanine + ADP + phosphate + H(+). Its pathway is cell wall biogenesis; peptidoglycan biosynthesis. Functionally, cell wall formation. In Mannheimia succiniciproducens (strain KCTC 0769BP / MBEL55E), this protein is UDP-N-acetylmuramate--L-alanine ligase.